Consider the following 624-residue polypeptide: Probable potassium transport system protein Kup (624 aa).

The next 12 helical transmembrane spans lie at A16 to Y36, I59 to V79, F106 to P126, F147 to T167, F174 to I194, L211 to T231, W252 to I272, I292 to G312, I342 to F362, A371 to V391, T394 to A414, and T418 to M438.

The protein belongs to the HAK/KUP transporter (TC 2.A.72) family.

Its subcellular location is the cell membrane. The catalysed reaction is K(+)(in) + H(+)(in) = K(+)(out) + H(+)(out). Its function is as follows. Transport of potassium into the cell. Likely operates as a K(+):H(+) symporter. This Corynebacterium glutamicum (strain ATCC 13032 / DSM 20300 / JCM 1318 / BCRC 11384 / CCUG 27702 / LMG 3730 / NBRC 12168 / NCIMB 10025 / NRRL B-2784 / 534) protein is Probable potassium transport system protein Kup.